The primary structure comprises 573 residues: 60 kDa lysophospholipase (573 aa).

Residues 9–355 form the Asparaginase/glutaminase domain; that stretch reads RRLLAVYTGG…DVRKELLTKD (347 aa). The active-site Acyl-ester intermediate is Thr-19. Positions 41–350 are asparaginase; the sequence is TLPMFHDEEH…PGLSLDVRKE (310 aa). Residues 84-86 and 116-117 each bind substrate; these read DSS and TD. ANK repeat units follow at residues 141–170, 399–429, 433–462, 466–495, and 533–562; these read GAQVPIHALWSDGRENLLGALLMAGQYVIP, ALVPSLACAAAHAGDVEALQALVELGSDLGL, NGQTPLHAAARGGHTEAVTMLLQRGVDVNT, DGFSPLLLAVRGRHPGVIGLLREAGASLST, and DGHSALHVAEAAGNLAVVAFLQSLEGAVGA.

In the N-terminal section; belongs to the asparaginase 1 family. As to quaternary structure, monomer.

The catalysed reaction is a 1-acyl-sn-glycero-3-phosphocholine + H2O = sn-glycerol 3-phosphocholine + a fatty acid + H(+). The enzyme catalyses L-asparagine + H2O = L-aspartate + NH4(+). It carries out the reaction a 1-O-alkyl-2-acetyl-sn-glycero-3-phosphocholine + H2O = a 1-O-alkyl-sn-glycero-3-phosphocholine + acetate + H(+). It catalyses the reaction 1-hexadecanoyl-sn-glycero-3-phosphocholine + H2O = sn-glycerol 3-phosphocholine + hexadecanoate + H(+). The catalysed reaction is 2 1-hexadecanoyl-sn-glycero-3-phosphocholine = 1,2-dihexadecanoyl-sn-glycero-3-phosphocholine + sn-glycerol 3-phosphocholine. The enzyme catalyses 1-octadecanoyl-sn-glycero-3-phosphocholine + H2O = octadecanoate + sn-glycerol 3-phosphocholine + H(+). It carries out the reaction 1-(9Z-octadecenoyl)-sn-glycero-3-phosphocholine + H2O = sn-glycerol 3-phosphocholine + (9Z)-octadecenoate + H(+). It catalyses the reaction 1-hexadecanoyl-sn-glycero-3-phosphoethanolamine + H2O = sn-glycero-3-phosphoethanolamine + hexadecanoate + H(+). The catalysed reaction is 1-(9Z-octadecenoyl)-sn-glycero-3-phosphoethanolamine + H2O = sn-glycero-3-phosphoethanolamine + (9Z)-octadecenoate + H(+). The enzyme catalyses 1-hexadecanoyl-sn-glycero-3-phosphoethanolamine + 1-hexadecanoyl-sn-glycero-3-phosphocholine = 1,2-dihexadecanoyl-sn-glycero-3-phosphoethanolamine + sn-glycerol 3-phosphocholine. It carries out the reaction 2-(5Z,8Z,11Z,14Z)-eicosatetraenoyl-sn-glycero-3-phosphocholine + H2O = sn-glycerol 3-phosphocholine + (5Z,8Z,11Z,14Z)-eicosatetraenoate + H(+). It catalyses the reaction 2-hexadecanoyl-sn-glycero-3-phosphocholine + H2O = sn-glycerol 3-phosphocholine + hexadecanoate + H(+). The catalysed reaction is 2 2-hexadecanoyl-sn-glycero-3-phosphocholine = 1,2-dihexadecanoyl-sn-glycero-3-phosphocholine + sn-glycerol 3-phosphocholine. The enzyme catalyses 1-O-(9Z)-octadecenoyl-2-O-acetyl-sn-glycero-3-phosphocholine + H2O = 2-acetyl-sn-glycero-3-phosphocholine + (9Z)-octadecenoate + H(+). It carries out the reaction a 1-acyl-sn-glycero-3-phospho-(1D-myo-inositol) + 1-hexadecanoyl-sn-glycero-3-phosphocholine = a 1-acyl-2-hexadecanoyl-sn-glycero-3-phospho-(1D-myo-inositol) + sn-glycerol 3-phosphocholine. It catalyses the reaction 2 2-(5Z,8Z,11Z,14Z)-eicosatetraenoyl-sn-glycero-3-phosphocholine = 1,2-di-(5Z,8Z,11Z,14Z-eicosatetraenoyl)-sn-glycero-3-phosphocholine + sn-glycerol 3-phosphocholine. Exhibits lysophospholipase, transacylase, PAF acetylhydrolase and asparaginase activities. Can catalyze three types of transacylation reactions: (1) acyl transfer from 1-acyl-sn-glycero-3-phosphocholine (1-acyl-GPC) to the sn-1(3) positions of glycerol and 2-acylglycerol (sn-1 to -1(3) transfer), (2) acyl transfer from 1-acyl-GPC to the sn-2 positions of 1-acyl-GPC, 1-acyl-sn-glycero-3-phosphoethanolamine (1-acyl-GPE), and other lysophospholipids (sn-1 to -2 transfer) and (3) acyl transfer from 2-acyl-GPC to the sn-1 position of 2-acyl-GPC and 2-acyl-GPE (sn-2 to -1 transfer). Mediates the synthesis of 1-arachidonoyl species of phospholipids by transferring the arachidonoyl residue from 2-arachidonoyl lysophospholipid to the sn-1 position of 2-acyl lysophospholipid. The polypeptide is 60 kDa lysophospholipase (ASPG) (Homo sapiens (Human)).